The following is a 762-amino-acid chain: 5-methyltetrahydropteroyltriglutamate--homocysteine methyltransferase (762 aa).

5-methyltetrahydropteroyltri-L-glutamate-binding positions include 17-20 (REWK) and Lys-111. L-homocysteine contacts are provided by residues 435–437 (IGS) and Glu-488. L-methionine contacts are provided by residues 435 to 437 (IGS) and Glu-488. 5-methyltetrahydropteroyltri-L-glutamate-binding positions include 519–520 (RC) and Trp-565. Asp-603 is an L-homocysteine binding site. Asp-603 lines the L-methionine pocket. A 5-methyltetrahydropteroyltri-L-glutamate-binding site is contributed by Glu-609. Zn(2+)-binding residues include His-645, Cys-647, and Glu-669. His-698 functions as the Proton donor in the catalytic mechanism. Residue Cys-730 coordinates Zn(2+).

It belongs to the vitamin-B12 independent methionine synthase family. Zn(2+) is required as a cofactor.

It catalyses the reaction 5-methyltetrahydropteroyltri-L-glutamate + L-homocysteine = tetrahydropteroyltri-L-glutamate + L-methionine. The protein operates within amino-acid biosynthesis; L-methionine biosynthesis via de novo pathway; L-methionine from L-homocysteine (MetE route): step 1/1. In terms of biological role, catalyzes the transfer of a methyl group from 5-methyltetrahydrofolate to homocysteine resulting in methionine formation. The protein is 5-methyltetrahydropteroyltriglutamate--homocysteine methyltransferase of Bacillus mycoides (strain KBAB4) (Bacillus weihenstephanensis).